Reading from the N-terminus, the 143-residue chain is Large ribosomal subunit protein uL13 (143 aa).

Belongs to the universal ribosomal protein uL13 family. Part of the 50S ribosomal subunit.

Its function is as follows. This protein is one of the early assembly proteins of the 50S ribosomal subunit, although it is not seen to bind rRNA by itself. It is important during the early stages of 50S assembly. The polypeptide is Large ribosomal subunit protein uL13 (Methanosarcina acetivorans (strain ATCC 35395 / DSM 2834 / JCM 12185 / C2A)).